A 200-amino-acid chain; its full sequence is Holliday junction branch migration complex subunit RuvA (200 aa).

The tract at residues 1–63 (MIALVQGRVA…EDSLTLFGFA (63 aa)) is domain I. A domain II region spans residues 64–138 (DADERDVFEL…DRLGPAQGAA (75 aa)). The segment at 138–142 (APAAP) is flexible linker. Residues 143-200 (VAVDDGADVVDALVGLGWPVRQAQDAVRGVLEDADGTAPDAAGLLRAALRSLAGDARG) form a domain III region.

It belongs to the RuvA family. Homotetramer. Forms an RuvA(8)-RuvB(12)-Holliday junction (HJ) complex. HJ DNA is sandwiched between 2 RuvA tetramers; dsDNA enters through RuvA and exits via RuvB. An RuvB hexamer assembles on each DNA strand where it exits the tetramer. Each RuvB hexamer is contacted by two RuvA subunits (via domain III) on 2 adjacent RuvB subunits; this complex drives branch migration. In the full resolvosome a probable DNA-RuvA(4)-RuvB(12)-RuvC(2) complex forms which resolves the HJ.

The protein resides in the cytoplasm. Its function is as follows. The RuvA-RuvB-RuvC complex processes Holliday junction (HJ) DNA during genetic recombination and DNA repair, while the RuvA-RuvB complex plays an important role in the rescue of blocked DNA replication forks via replication fork reversal (RFR). RuvA specifically binds to HJ cruciform DNA, conferring on it an open structure. The RuvB hexamer acts as an ATP-dependent pump, pulling dsDNA into and through the RuvAB complex. HJ branch migration allows RuvC to scan DNA until it finds its consensus sequence, where it cleaves and resolves the cruciform DNA. This is Holliday junction branch migration complex subunit RuvA from Beutenbergia cavernae (strain ATCC BAA-8 / DSM 12333 / CCUG 43141 / JCM 11478 / NBRC 16432 / NCIMB 13614 / HKI 0122).